A 339-amino-acid chain; its full sequence is DNA repair protein RAD51 homolog 1 (339 aa).

The tract at residues 1–23 (MAMQVQFEASTDTSAEEESFGPE) is disordered. In terms of domain architecture, HhH spans 48–77 (TVESVAHAPKKELLNIKGISEAKADKILAE). Residue 127-134 (GEFRTGKT) participates in ATP binding.

It belongs to the RecA family. RAD51 subfamily. In terms of assembly, forms linear homooligomers, giving rise to a RAD51 nucleoprotein filament, which is essential for strand-pairing reactions during DNA recombination. In terms of tissue distribution, expressed at high levels in lymphoid and reproductive organs.

It is found in the nucleus. It localises to the cytoplasm. The protein resides in the chromosome. Plays an important role in homologous strand exchange, a key step in DNA repair through homologous recombination (HR). Binds to single-stranded DNA in an ATP-dependent manner to form nucleoprotein filaments which are essential for the homology search and strand exchange. Catalyzes the recognition of homology and strand exchange between homologous DNA partners to form a joint molecule between a processed DNA break and the repair template. Recruited to resolve stalled replication forks during replication stress. Also involved in interstrand cross-link repair. This Gallus gallus (Chicken) protein is DNA repair protein RAD51 homolog 1 (RAD51A).